A 199-amino-acid chain; its full sequence is Protein GrpE (199 aa).

The tract at residues 20-52 (YKVENEILEEETDEESQHQEPALGHPSYTALEE) is disordered.

This sequence belongs to the GrpE family. In terms of assembly, homodimer.

The protein resides in the cytoplasm. Functionally, participates actively in the response to hyperosmotic and heat shock by preventing the aggregation of stress-denatured proteins, in association with DnaK and GrpE. It is the nucleotide exchange factor for DnaK and may function as a thermosensor. Unfolded proteins bind initially to DnaJ; upon interaction with the DnaJ-bound protein, DnaK hydrolyzes its bound ATP, resulting in the formation of a stable complex. GrpE releases ADP from DnaK; ATP binding to DnaK triggers the release of the substrate protein, thus completing the reaction cycle. Several rounds of ATP-dependent interactions between DnaJ, DnaK and GrpE are required for fully efficient folding. The chain is Protein GrpE from Legionella pneumophila (strain Corby).